The primary structure comprises 155 residues: Cytochrome P450 (155 aa).

Residue Cys99 participates in heme binding.

This sequence belongs to the cytochrome P450 family. It depends on heme as a cofactor.

The sequence is that of Cytochrome P450 from Helianthus annuus (Common sunflower).